The following is a 208-amino-acid chain: Large ribosomal subunit protein bL25 (208 aa).

The protein belongs to the bacterial ribosomal protein bL25 family. CTC subfamily. In terms of assembly, part of the 50S ribosomal subunit; part of the 5S rRNA/L5/L18/L25 subcomplex. Contacts the 5S rRNA. Binds to the 5S rRNA independently of L5 and L18.

This is one of the proteins that binds to the 5S RNA in the ribosome where it forms part of the central protuberance. The sequence is that of Large ribosomal subunit protein bL25 from Bartonella quintana (strain Toulouse) (Rochalimaea quintana).